Here is a 112-residue protein sequence, read N- to C-terminus: MTGKTVTRADLAESVFRKVGLSRTESAELVETVIDEICNAIVRGETVKLSSFATFQVRDKNERIGRNPKTGEEVPISPRRVMTFKASNVLKTRILKAHASRKAKARPANPAS.

Belongs to the bacterial histone-like protein family. In terms of assembly, heterodimer of an alpha and a beta chain.

In terms of biological role, this protein is one of the two subunits of integration host factor, a specific DNA-binding protein that functions in genetic recombination as well as in transcriptional and translational control. In Rhizobium rhizogenes (strain K84 / ATCC BAA-868) (Agrobacterium radiobacter), this protein is Integration host factor subunit alpha.